Here is a 728-residue protein sequence, read N- to C-terminus: Methylmalonyl-CoA mutase large subunit (728 aa).

Residues Tyr75, Met78, Arg82, Thr85, Arg87, Tyr89, and Ser114 each contribute to the (R)-methylmalonyl-CoA site. Cob(II)alamin contacts are provided by Phe117 and Ala139. (R)-methylmalonyl-CoA-binding residues include Thr195 and Gln197. Residues Val206 and Arg207 each coordinate cob(II)alamin. Residues Arg207, His244, Arg283, and Ser285 each coordinate (R)-methylmalonyl-CoA. Positions 333, 370, 373, 609, 610, 611, 612, 655, 657, 686, and 709 each coordinate cob(II)alamin. In terms of domain architecture, B12-binding spans 597–728 (RPRILLAKMG…VKKLRASLDA (132 aa)).

This sequence belongs to the methylmalonyl-CoA mutase family. Heterodimer of an alpha and a beta chain. Adenosylcob(III)alamin is required as a cofactor.

The catalysed reaction is (R)-methylmalonyl-CoA = succinyl-CoA. Its function is as follows. Catalyzes the reversible conversion of succinyl-CoA to (R)-methylmalonyl-CoA through a radical mechanism. Is involved in the fermentation of pyruvate to propanoate that occurs in Propionibacteria. The sequence is that of Methylmalonyl-CoA mutase large subunit (mutB) from Propionibacterium freudenreichii subsp. shermanii.